The chain runs to 314 residues: Methionyl-tRNA formyltransferase (314 aa).

113–116 contributes to the (6S)-5,6,7,8-tetrahydrofolate binding site; the sequence is SLLP.

The protein belongs to the Fmt family.

The enzyme catalyses L-methionyl-tRNA(fMet) + (6R)-10-formyltetrahydrofolate = N-formyl-L-methionyl-tRNA(fMet) + (6S)-5,6,7,8-tetrahydrofolate + H(+). Functionally, attaches a formyl group to the free amino group of methionyl-tRNA(fMet). The formyl group appears to play a dual role in the initiator identity of N-formylmethionyl-tRNA by promoting its recognition by IF2 and preventing the misappropriation of this tRNA by the elongation apparatus. This is Methionyl-tRNA formyltransferase from Pseudomonas syringae pv. syringae (strain B728a).